Reading from the N-terminus, the 229-residue chain is Clathrin light chain B (229 aa).

Low complexity-rich tracts occupy residues 1 to 17 and 45 to 58; these read MAEDFGFFSSSESGAPE and GAPAASQVASAQPG. Positions 1–70 are disordered; the sequence is MAEDFGFFSS…SGAGSEDMST (70 aa). S11 and S13 each carry phosphoserine. An involved in binding clathrin heavy chain region spans residues 93 to 155; that stretch reads ADRLTQEPES…QVEKNKINNR (63 aa). The residue at position 187 (T187) is a Phosphothreonine. C199 and C209 form a disulfide bridge. K204 bears the N6-acetyllysine mark. A Phosphoserine modification is found at S217.

Belongs to the clathrin light chain family. As to quaternary structure, clathrin coats are formed from molecules containing 3 heavy chains and 3 light chains. Interacts (via N-terminus) with HIP1. Interacts with HIP1R.

Its subcellular location is the cytoplasmic vesicle membrane. The protein resides in the membrane. It localises to the coated pit. Clathrin is the major protein of the polyhedral coat of coated pits and vesicles. In Mus musculus (Mouse), this protein is Clathrin light chain B (Cltb).